Consider the following 303-residue polypeptide: Shikimate kinase 1, chloroplastic (303 aa).

Residues 1–66 (MEAAITQRIQ…QRRAVSPAVS (66 aa)) constitute a chloroplast transit peptide. 109 to 116 (GMMGSGKT) contributes to the ATP binding site. A Mg(2+)-binding site is contributed by T116. Residues D134, R159, and G181 each coordinate substrate. R220 is a binding site for ATP.

This sequence belongs to the shikimate kinase family. Homodimer. Requires Mg(2+) as cofactor.

It localises to the plastid. The protein resides in the chloroplast. It catalyses the reaction shikimate + ATP = 3-phosphoshikimate + ADP + H(+). Its pathway is metabolic intermediate biosynthesis; chorismate biosynthesis; chorismate from D-erythrose 4-phosphate and phosphoenolpyruvate: step 5/7. Functionally, catalyzes the specific phosphorylation of the 3-hydroxyl group of shikimic acid using ATP as a cosubstrate. The sequence is that of Shikimate kinase 1, chloroplastic (SK1) from Arabidopsis thaliana (Mouse-ear cress).